A 379-amino-acid chain; its full sequence is Gonadotropin-releasing hormone II receptor (379 aa).

Residues 1–40 (MSAGNGTPWGSAVGEEAWAGSGVAVEGSELPTFSTAAKVR) lie on the Extracellular side of the membrane. A helical membrane pass occupies residues 41-60 (VGVTIVLFVSSAGGNLAVLW). The Cytoplasmic portion of the chain corresponds to 61–76 (SVTRPQPSQLRPSPVR). The chain crosses the membrane as a helical span at residues 77 to 96 (TLFAHLAAADLLVTFVVMPL). Residues 97–114 (DATWNITVQWLAGDIACR) lie on the Extracellular side of the membrane. Asparagine 101 carries an N-linked (GlcNAc...) asparagine glycan. Cysteine 113 and cysteine 188 form a disulfide bridge. Residues 115–136 (TLMFLKLMAMYSAAFLPVVIGL) traverse the membrane as a helical segment. At 137-160 (DRQAAVLNPLGSRSGVRKLLGAAW) the chain is on the cytoplasmic side. The helical transmembrane segment at 161 to 178 (GLSFLLALPQLFLFHTVH) threads the bilayer. Residues 179 to 204 (RAGPVPFTQCVTKGSFKARWQETTYN) are Extracellular-facing. A helical transmembrane segment spans residues 205–224 (LFTFCCLFLLPLIAMAICYS). Over 225 to 278 (RIVLSVSSPQTRKGSHAPAGEFALRRSFDNRPRVCLRALRLALLILLTFILCWT) the chain is Cytoplasmic. The chain crosses the membrane as a helical span at residues 279–297 (PYYLLGLWYWFSPTMLTEV). The Extracellular segment spans residues 298 to 303 (PPSLSH). Residues 304 to 323 (ILFLFGLLNAPLDPLLYGAF) traverse the membrane as a helical segment. At 324-379 (TFGCRRGHQELSIDSSKEGSGRMLQQEIHALRQQEVQKTVTSRSAGETKGISITSI) the chain is on the cytoplasmic side.

The protein belongs to the G-protein coupled receptor 1 family. In terms of processing, phosphorylated on the C-terminal cytoplasmic tail.

The protein localises to the cell membrane. Functionally, receptor for gonadotropin releasing hormone II (GnRH II). This receptor mediates its action by association with G proteins that activate a phosphatidylinositol-calcium second messenger system. This chain is Gonadotropin-releasing hormone II receptor (GNRHR2), found in Chlorocebus aethiops (Green monkey).